The following is a 255-amino-acid chain: Hydroxyacylglutathione hydrolase (255 aa).

Zn(2+) contacts are provided by histidine 53, histidine 55, aspartate 57, histidine 58, histidine 110, aspartate 127, and histidine 165.

It belongs to the metallo-beta-lactamase superfamily. Glyoxalase II family. Monomer. The cofactor is Zn(2+).

The enzyme catalyses an S-(2-hydroxyacyl)glutathione + H2O = a 2-hydroxy carboxylate + glutathione + H(+). Its pathway is secondary metabolite metabolism; methylglyoxal degradation; (R)-lactate from methylglyoxal: step 2/2. Functionally, thiolesterase that catalyzes the hydrolysis of S-D-lactoyl-glutathione to form glutathione and D-lactic acid. In Xanthomonas euvesicatoria pv. vesicatoria (strain 85-10) (Xanthomonas campestris pv. vesicatoria), this protein is Hydroxyacylglutathione hydrolase.